The chain runs to 253 residues: Tryptophan synthase alpha chain (253 aa).

Active-site proton acceptor residues include Glu47 and Asp58.

Belongs to the TrpA family. In terms of assembly, tetramer of two alpha and two beta chains.

The enzyme catalyses (1S,2R)-1-C-(indol-3-yl)glycerol 3-phosphate + L-serine = D-glyceraldehyde 3-phosphate + L-tryptophan + H2O. The protein operates within amino-acid biosynthesis; L-tryptophan biosynthesis; L-tryptophan from chorismate: step 5/5. Functionally, the alpha subunit is responsible for the aldol cleavage of indoleglycerol phosphate to indole and glyceraldehyde 3-phosphate. The polypeptide is Tryptophan synthase alpha chain (Lactococcus lactis subsp. cremoris (strain MG1363)).